We begin with the raw amino-acid sequence, 123 residues long: uncharacterized protein (123 aa).

Residues 5–25 form a helical membrane-spanning segment; sequence GTLVIIFAIVLILCIMLLFFY. The segment at 32–53 is disordered; that stretch reads KSGVLPPPIPPPTPPPPKKKYD. The segment covering 36 to 47 has biased composition (pro residues); sequence LPPPIPPPTPPP.

The protein belongs to the asfivirus CP123L family.

The protein resides in the host membrane. The protein localises to the virion. This is an uncharacterized protein from Ornithodoros (relapsing fever ticks).